Here is a 114-residue protein sequence, read N- to C-terminus: Putative cysteine proteinase inhibitor 9 (114 aa).

The first 23 residues, 1–23 (MRTSSLVLFAAVAVFGAACTAAA), serve as a signal peptide directing secretion.

The protein belongs to the cystatin family. Phytocystatin subfamily.

It localises to the secreted. Its function is as follows. Specific inhibitor of cysteine proteinases. Probably involved in the regulation of endogenous processes and in defense against pests and pathogens. The sequence is that of Putative cysteine proteinase inhibitor 9 from Oryza sativa subsp. japonica (Rice).